The sequence spans 99 residues: Large ribosomal subunit protein uL23 (99 aa).

The protein belongs to the universal ribosomal protein uL23 family. Part of the 50S ribosomal subunit. Contacts protein L29, and trigger factor when it is bound to the ribosome.

Its function is as follows. One of the early assembly proteins it binds 23S rRNA. One of the proteins that surrounds the polypeptide exit tunnel on the outside of the ribosome. Forms the main docking site for trigger factor binding to the ribosome. The polypeptide is Large ribosomal subunit protein uL23 (Magnetococcus marinus (strain ATCC BAA-1437 / JCM 17883 / MC-1)).